We begin with the raw amino-acid sequence, 541 residues long: MDSRRSLLVLALIFISFLVYQQWQLDKNPPVQTEQTTSITATSDVPASSPSNSQAIADSQTRGRIITLENDVFRLKIDTLGGDVISSELLKYDAELDSKTPFELLKDTKEHIYIAQSGLIGKNGIDTRSGRAQYQIEGDNFKLAEGQESLSVPLLFEKDGVTYQKIFVLKRGSYDLGVDYKIDNQSGQAIEVEPYGQLKHSIVESSGNVAMPTYTGGAYSSSETNYKKYSFSDMQDNNLSIDTKAGWVAVLQHYFVSAWIPNQDVNNQLYTITDSKNNVASIGYRGSVVTIPAGSQETITSSLWTGPKLQNQMATVANNLDLTVDYGWAWFIAKPLFWLLTFIQGIVSNWGLAIICVTIVVKAILYPLTKAQYTSMAKMRILQPKMQEMRERFGDDRQRMSQEMMKLYKEEKVNPLGGCLPILLQMPIFIALYWTFLEAVELRHAPFFGWIQDLSAQDPYYILPILMGISMFLLQKMSPTPVTDPTQQKVMNFMPLVFMFFFLWFPSGLVLYWLVSNLITIAQQQLIYRGLEKKGLHSRKK.

The chain crosses the membrane as a helical span at residues 6 to 26 (SLLVLALIFISFLVYQQWQLD). Positions 34-56 (EQTTSITATSDVPASSPSNSQAI) are disordered. The next 4 membrane-spanning stretches (helical) occupy residues 337–357 (FWLL…IICV), 416–436 (LGGC…YWTF), 454–474 (LSAQ…MFLL), and 495–515 (PLVF…YWLV).

Belongs to the OXA1/ALB3/YidC family. Type 1 subfamily. As to quaternary structure, interacts with the Sec translocase complex via SecD. Specifically interacts with transmembrane segments of nascent integral membrane proteins during membrane integration.

Its subcellular location is the cell inner membrane. Its function is as follows. Required for the insertion and/or proper folding and/or complex formation of integral membrane proteins into the membrane. Involved in integration of membrane proteins that insert both dependently and independently of the Sec translocase complex, as well as at least some lipoproteins. Aids folding of multispanning membrane proteins. In Haemophilus influenzae (strain ATCC 51907 / DSM 11121 / KW20 / Rd), this protein is Membrane protein insertase YidC.